The following is a 753-amino-acid chain: Dolichyl-phosphate-mannose--protein mannosyltransferase 3 (753 aa).

Topologically, residues 1–50 (MPYRVATGYSEKSTDDDLIWRTPIVKEELEDADNFLKDDAELYDKVKNES) are cytoplasmic. A helical transmembrane segment spans residues 51–71 (AVSHLDTIVMPIIFTVLGMFT). The Lumenal portion of the chain corresponds to 72 to 148 (RMYKIGRNNH…IDYVKMRLFQ (77 aa)). N-linked (GlcNAc...) asparagine glycosylation occurs at Asn124. A helical transmembrane segment spans residues 149-169 (AMFSSLCVPLAYFTGRAIGFS). At 170–174 (RLSVW) the chain is on the cytoplasmic side. Residues 175 to 195 (LFTILVIFENSYATLGKFILL) form a helical membrane-spanning segment. The Lumenal portion of the chain corresponds to 196 to 235 (DSMLLFFTVSSYFCLAKFHTMRKSPFSARWWLWLCLTGLN). The chain crosses the membrane as a helical span at residues 236–256 (LGCAISVKMVGLFIISVVGIY). Residues 257 to 282 (TISELWNLLSDRSVSWKVYVNHWLAR) are Cytoplasmic-facing. Residues 283–303 (IFGLIIIPVCVFLLCFKIHFD) form a helical membrane-spanning segment. Residues 304-602 (LLSNSGPGDS…IKYFLLGSPA (299 aa)) lie on the Lumenal side of the membrane. Asn324 carries N-linked (GlcNAc...) asparagine glycosylation. In terms of domain architecture, MIR 1 spans 332–387 (PRDVALGSSIISIKNQALGGALLHSHVQPFPEGSEQQQVTVYGYSDANNEWFFQRI). An N-linked (GlcNAc...) asparagine glycan is attached at Asn398. 2 consecutive MIR domains span residues 401 to 457 (IEFV…IEIV) and 465 to 523 (PTLL…IETH). Residues 603 to 623 (SVWPSSIAVCALIIHVIFLTL) traverse the membrane as a helical segment. At 624–639 (KWQRQCVILSDPVERD) the chain is on the cytoplasmic side. A helical membrane pass occupies residues 640-660 (VFVMAAFYPLLAWLLHYMPFV). At 661-665 (VMSRV) the chain is on the lumenal side. Residues 666-686 (VYAHHYLPTLYFALMILSYYF) traverse the membrane as a helical segment. At 687-703 (DMITKRWATRNTGKFLR) the chain is on the cytoplasmic side. A helical transmembrane segment spans residues 704 to 724 (LGAYIVYGSIVIAGFFYFSPF). Residues 725 to 753 (SFGMDGPVDDYAYLAWLPTWQIVEDIRNT) are Lumenal-facing.

The protein belongs to the glycosyltransferase 39 family. PMT3 and PMT5 form a functional heterodimer. Also forms a minor complex with PMT1.

The protein resides in the endoplasmic reticulum membrane. The catalysed reaction is a di-trans,poly-cis-dolichyl beta-D-mannosyl phosphate + L-seryl-[protein] = 3-O-(alpha-D-mannosyl)-L-seryl-[protein] + a di-trans,poly-cis-dolichyl phosphate + H(+). The enzyme catalyses a di-trans,poly-cis-dolichyl beta-D-mannosyl phosphate + L-threonyl-[protein] = 3-O-(alpha-D-mannosyl)-L-threonyl-[protein] + a di-trans,poly-cis-dolichyl phosphate + H(+). It participates in protein modification; protein glycosylation. Its function is as follows. Protein O-mannosyltransferase involved in O-glycosylation which is essential for cell wall rigidity. Forms a heterodimeric complex with PMT5 and more rarely with PMT1 to transfer mannose from Dol-P-mannose to Ser or Thr residues on proteins. Seems to have redundant activity to PMT2. The protein is Dolichyl-phosphate-mannose--protein mannosyltransferase 3 of Saccharomyces cerevisiae (strain ATCC 204508 / S288c) (Baker's yeast).